The following is a 282-amino-acid chain: DegV domain-containing protein SPy_0865/M5005_Spy0672 (282 aa).

Residues 3-280 form the DegV domain; the sequence is LAVITDSTAT…EGAIAFGVTP (278 aa). Hexadecanoate is bound by residues threonine 61 and serine 94.

In terms of biological role, may bind long-chain fatty acids, such as palmitate, and may play a role in lipid transport or fatty acid metabolism. This Streptococcus pyogenes serotype M1 protein is DegV domain-containing protein SPy_0865/M5005_Spy0672.